The sequence spans 662 residues: MEALGARGALAGFLRALCVLGCLLGRATAPPSPVIKFPGDVAPKTDKELAVQYLNTFYGCPKDSCNLFVLKDTLKKMQKFFGLPQTGELDQSTIETMRKPRCGNPDVANYNFFPRKPKWDKNQITYRIIGYTPDLDPETVDDAFARAFQVWSNVTPLRFSRIHDGEADIMINFGRWEHGDGYPFDGKDGLLAHAFAPGTGVGGDSHFDDDELWTLGEGQVVRVKYGNADGEYCKFPFLFNGKEYTSCTDTGRSDGFLWCSTTYNFEKDGKYGFCPHEALFTMGGNADGQPCKFPFRFQGTSYSSCTTEGRTDGYRWCGTTEDYDRDKKYGFCPETAMSTIGGNSEGAPCVFPFTFLGNKYESCTSAGRSDGKMWCATSTNYDDDRKWGFCPDQGYSLFLVAAHEFGHAMGLEHSQDPGALMAPIYTYTKNFRLSQDDIKGIQELYGASPDAGTDAGTGPTPTLGPVTPEICTQDIVFDGIAQIRGEIFFFKDRFIWRTVTPGDKPMGPLLVATFWPELPEKIDAVYEAPQEEKAVFFAGNEYWVYSASTLERGYPKPLTSLGLPPDVQRVDAAFNWSKNKKTYIFAGDKFWRYNEVKKKMDPGFPRLIADAWNAIPDHLDAVVDLQGSGHSYFFKGTYYLKLENQSLKSVKVGSIKTDWLGC.

The signal sequence occupies residues 1 to 29 (MEALGARGALAGFLRALCVLGCLLGRATA). The propeptide at 30–109 (PPSPVIKFPG…PRCGNPDVAN (80 aa)) is activation peptide. Positions 100-107 (PRCGNPDV) match the Cysteine switch motif. Cys102 provides a ligand contact to Zn(2+). The collagenase-like 1 stretch occupies residues 110-221 (YNFFPRKPKW…LWTLGEGQVV (112 aa)). The Ca(2+) site is built by Asp134 and Asp168. Zn(2+) contacts are provided by His178 and Asp180. 2 residues coordinate Ca(2+): Asp185 and Gly186. His193 provides a ligand contact to Zn(2+). Residues Gly200, Gly202, and Asp204 each coordinate Ca(2+). Zn(2+) is bound at residue His206. Ca(2+)-binding residues include Asp208, Asp209, and Glu211. The interval 222–396 (RVKYGNADGE…WGFCPDQGYS (175 aa)) is collagen-binding. 3 consecutive Fibronectin type-II domains span residues 228–276 (ADGE…FCPH), 286–334 (ADGQ…FCPE), and 344–392 (SEGA…FCPD). Cystine bridges form between Cys233–Cys259, Cys247–Cys274, Cys291–Cys317, Cys305–Cys332, Cys349–Cys375, and Cys363–Cys390. Residues 397–467 (LFLVAAHEFG…GPTPTLGPVT (71 aa)) form a collagenase-like 2 region. His403 is a binding site for Zn(2+). Glu404 is a catalytic residue. Zn(2+) is bound by residues His407 and His413. The tract at residues 414–662 (SQDPGALMAP…GSIKTDWLGC (249 aa)) is required for inhibitor TIMP2 binding. The cysteines at positions 471 and 662 are disulfide-linked. Hemopexin repeat units follow at residues 474–518 (DIVF…WPEL), 519–565 (PEKI…GLPP), 567–615 (VQRV…WNAI), and 616–662 (PDHL…WLGC). Residues Asp478, Asp523, and Asp571 each coordinate Ca(2+). Asn575 is a glycosylation site (N-linked (GlcNAc...) asparagine). Residue Asp620 participates in Ca(2+) binding. An N-linked (GlcNAc...) asparagine glycan is attached at Asn644.

The protein belongs to the peptidase M10A family. As to quaternary structure, interacts (via the C-terminal hemopexin-like domains-containing region) with the integrin alpha-V/beta-3; the interaction promotes vascular invasion in angiogenic vessels and melamoma cells. Interacts (via the C-terminal PEX domain) with TIMP2 (via the C-terminal); the interaction inhibits the degradation activity. Interacts with GSK3B. It depends on Ca(2+) as a cofactor. Zn(2+) is required as a cofactor. Post-translationally, phosphorylation on multiple sites modulates enzymatic activity. Phosphorylated by PKC in vitro. The propeptide is processed by MMP14 (MT-MMP1) and MMP16 (MT-MMP3). Autocatalytic cleavage in the C-terminal produces the anti-angiogenic peptide, PEX. This processing appears to be facilitated by binding integrinv/beta3.

It localises to the secreted. Its subcellular location is the extracellular space. It is found in the extracellular matrix. The protein resides in the membrane. The protein localises to the nucleus. The catalysed reaction is Cleavage of gelatin type I and collagen types IV, V, VII, X. Cleaves the collagen-like sequence Pro-Gln-Gly-|-Ile-Ala-Gly-Gln.. Its function is as follows. Ubiquitinous metalloproteinase that is involved in diverse functions such as remodeling of the vasculature, angiogenesis, tissue repair, tumor invasion, inflammation, and atherosclerotic plaque rupture. As well as degrading extracellular matrix proteins, can also act on several nonmatrix proteins such as big endothelial 1 and beta-type CGRP promoting vasoconstriction. Also cleaves KISS at a Gly-|-Leu bond. Appears to have a role in myocardial cell death pathways. Contributes to myocardial oxidative stress by regulating the activity of GSK3beta. Cleaves GSK3beta in vitro. Involved in the formation of the fibrovascular tissues. In terms of biological role, PEX, the C-terminal non-catalytic fragment of MMP2, possesses anti-angiogenic and anti-tumor properties and inhibits cell migration and cell adhesion to FGF2 and vitronectin. Ligand for integrin alpha-v/beta-3 on the surface of blood vessels. The protein is 72 kDa type IV collagenase (MMP2) of Oryctolagus cuniculus (Rabbit).